Reading from the N-terminus, the 338-residue chain is Nicotinate-nucleotide--dimethylbenzimidazole phosphoribosyltransferase (338 aa).

The active-site Proton acceptor is the Glu-305.

This sequence belongs to the CobT family.

It carries out the reaction 5,6-dimethylbenzimidazole + nicotinate beta-D-ribonucleotide = alpha-ribazole 5'-phosphate + nicotinate + H(+). It functions in the pathway nucleoside biosynthesis; alpha-ribazole biosynthesis; alpha-ribazole from 5,6-dimethylbenzimidazole: step 1/2. Functionally, catalyzes the synthesis of alpha-ribazole-5'-phosphate from nicotinate mononucleotide (NAMN) and 5,6-dimethylbenzimidazole (DMB). The protein is Nicotinate-nucleotide--dimethylbenzimidazole phosphoribosyltransferase of Sinorhizobium fredii (strain NBRC 101917 / NGR234).